Consider the following 364-residue polypeptide: D-alanine--D-alanine ligase (364 aa).

The 206-residue stretch at 141–346 (KNLFAQAGLR…YSELIERLIA (206 aa)) folds into the ATP-grasp domain. 174-229 (EQELGYPCFVKPANAGSSVGISKCKQRDDLKTAFAEAFKYDRKIIIEESIVGREIE) contacts ATP. Mg(2+)-binding residues include Asp-300, Glu-313, and Asn-315.

Belongs to the D-alanine--D-alanine ligase family. It depends on Mg(2+) as a cofactor. Mn(2+) serves as cofactor.

The protein resides in the cytoplasm. It catalyses the reaction 2 D-alanine + ATP = D-alanyl-D-alanine + ADP + phosphate + H(+). It participates in cell wall biogenesis; peptidoglycan biosynthesis. Its function is as follows. Cell wall formation. The chain is D-alanine--D-alanine ligase from Geobacillus thermodenitrificans (strain NG80-2).